The following is a 297-amino-acid chain: HTH-type transcriptional regulator ArgP (297 aa).

Residues 4–60 enclose the HTH lysR-type domain; the sequence is PDYRTLQALDAVIRERGFERAAQKLCITQSAVSQRIKQLENMFGQPLLVRTVPPRPT. A DNA-binding region (H-T-H motif) is located at residues 21–40; sequence FERAAQKLCITQSAVSQRIK.

The protein belongs to the LysR transcriptional regulatory family. As to quaternary structure, homodimer.

Its function is as follows. Controls the transcription of genes involved in arginine and lysine metabolism. This chain is HTH-type transcriptional regulator ArgP, found in Enterobacter sp. (strain 638).